A 916-amino-acid chain; its full sequence is RNA-directed DNA polymerase from mobile element jockey (916 aa).

The 275-residue stretch at 483–757 folds into the Reverse transcriptase domain; sequence SILRVGYFPK…HEYKYLGVIL (275 aa). The segment at 890 to 916 is disordered; it reads RSASPRSRVRRRLKRHHPQDLLDRALT. Positions 896–906 are enriched in basic residues; sequence SRVRRRLKRHH. The segment covering 907–916 has biased composition (basic and acidic residues); that stretch reads PQDLLDRALT.

Requires Mg(2+) as cofactor. The cofactor is Mn(2+).

It catalyses the reaction DNA(n) + a 2'-deoxyribonucleoside 5'-triphosphate = DNA(n+1) + diphosphate. Its activity is regulated as follows. Inactivated by sulphydryl reagent. This is RNA-directed DNA polymerase from mobile element jockey (jockey\pol) from Drosophila funebris (Fruit fly).